The primary structure comprises 249 residues: Probable transcriptional regulatory protein Minf_0651 (249 aa).

The protein belongs to the TACO1 family.

It localises to the cytoplasm. The sequence is that of Probable transcriptional regulatory protein Minf_0651 from Methylacidiphilum infernorum (isolate V4) (Methylokorus infernorum (strain V4)).